The following is a 315-amino-acid chain: Lipoyl synthase (315 aa).

Positions 62, 67, 73, 88, 92, 95, and 302 each coordinate [4Fe-4S] cluster. One can recognise a Radical SAM core domain in the interval 74-292; it reads FNHGTATFMI…KIALKLGFIR (219 aa).

It belongs to the radical SAM superfamily. Lipoyl synthase family. The cofactor is [4Fe-4S] cluster.

The protein localises to the cytoplasm. It catalyses the reaction [[Fe-S] cluster scaffold protein carrying a second [4Fe-4S](2+) cluster] + N(6)-octanoyl-L-lysyl-[protein] + 2 oxidized [2Fe-2S]-[ferredoxin] + 2 S-adenosyl-L-methionine + 4 H(+) = [[Fe-S] cluster scaffold protein] + N(6)-[(R)-dihydrolipoyl]-L-lysyl-[protein] + 4 Fe(3+) + 2 hydrogen sulfide + 2 5'-deoxyadenosine + 2 L-methionine + 2 reduced [2Fe-2S]-[ferredoxin]. It participates in protein modification; protein lipoylation via endogenous pathway; protein N(6)-(lipoyl)lysine from octanoyl-[acyl-carrier-protein]: step 2/2. Catalyzes the radical-mediated insertion of two sulfur atoms into the C-6 and C-8 positions of the octanoyl moiety bound to the lipoyl domains of lipoate-dependent enzymes, thereby converting the octanoylated domains into lipoylated derivatives. The polypeptide is Lipoyl synthase (Vesicomyosocius okutanii subsp. Calyptogena okutanii (strain HA)).